A 154-amino-acid chain; its full sequence is Putative esterase AF_2264 (154 aa).

This sequence belongs to the thioesterase PaaI family.

In Archaeoglobus fulgidus (strain ATCC 49558 / DSM 4304 / JCM 9628 / NBRC 100126 / VC-16), this protein is Putative esterase AF_2264.